Reading from the N-terminus, the 343-residue chain is MDLTYIPEDLSSCPKFVNKILSSHQPLFSCPGDNVFGYDWSHDYPLFGNLVIMVSISHFKQLHSPTNFLILSMATTDFLLGFVIMPYSIMRSVESCWYFGDGFCKFHTSFDMMLRLTSIFHLCSIAIDRFYAVCYPLHYTTKMTNSTIKQLLAFCWSVPALFSFGLVLSEADVSGMQSYKILVACFNFCALTFNKFWGTILFTTCFFTPGSIMVGIYGKIFIVSKQHARVISHVPENTKGAVKKHLSKKKDRKAAKTLGIVMGVFLACWLPCFLAVLIDPYLDYSTPILILDLLVWLRYFNSTCNPLIHGFFNPWFQKAFKYIVSGKIFSSHSETANLFPEAH.

The Extracellular segment spans residues 1-35 (MDLTYIPEDLSSCPKFVNKILSSHQPLFSCPGDNV). The helical transmembrane segment at 36–56 (FGYDWSHDYPLFGNLVIMVSI) threads the bilayer. The Cytoplasmic segment spans residues 57 to 68 (SHFKQLHSPTNF). A helical membrane pass occupies residues 69–89 (LILSMATTDFLLGFVIMPYSI). Topologically, residues 90–150 (MRSVESCWYF…TKMTNSTIKQ (61 aa)) are extracellular. A disulfide bridge links C104 with C189. N-linked (GlcNAc...) asparagine glycosylation is present at N145. Residues 151 to 168 (LLAFCWSVPALFSFGLVL) form a helical membrane-spanning segment. Topologically, residues 169–172 (SEAD) are cytoplasmic. The tract at residues 173 to 186 (VSGMQSYKILVACF) is extracellular Loop 2 (ECL2). A helical transmembrane segment spans residues 173 to 193 (VSGMQSYKILVACFNFCALTF). Topologically, residues 194–198 (NKFWG) are extracellular. Residues 199–223 (TILFTTCFFTPGSIMVGIYGKIFIV) form a helical membrane-spanning segment. Topologically, residues 224–257 (SKQHARVISHVPENTKGAVKKHLSKKKDRKAAKT) are cytoplasmic. A helical transmembrane segment spans residues 258–278 (LGIVMGVFLACWLPCFLAVLI). Residues 279–287 (DPYLDYSTP) lie on the Extracellular side of the membrane. A helical membrane pass occupies residues 288–308 (ILILDLLVWLRYFNSTCNPLI). The Cytoplasmic portion of the chain corresponds to 309 to 343 (HGFFNPWFQKAFKYIVSGKIFSSHSETANLFPEAH).

This sequence belongs to the G-protein coupled receptor 1 family. As to expression, not expressed in the pons, thalamus, globus pallidus, caudate, putamen or cerebellum.

It is found in the cell membrane. Its function is as follows. Putative olfactory receptor activated by several primary trace amines. In Homo sapiens (Human), this protein is Putative trace amine-associated receptor 3.